The sequence spans 353 residues: RNA 3'-terminal phosphate cyclase (353 aa).

ATP is bound by residues glutamine 100 and 285-289 (HAADQ). The Tele-AMP-histidine intermediate role is filled by histidine 311.

The protein belongs to the RNA 3'-terminal cyclase family. Type 1 subfamily.

It localises to the cytoplasm. The catalysed reaction is a 3'-end 3'-phospho-ribonucleotide-RNA + ATP = a 3'-end 2',3'-cyclophospho-ribonucleotide-RNA + AMP + diphosphate. In terms of biological role, catalyzes the conversion of 3'-phosphate to a 2',3'-cyclic phosphodiester at the end of RNA. The mechanism of action of the enzyme occurs in 3 steps: (A) adenylation of the enzyme by ATP; (B) transfer of adenylate to an RNA-N3'P to produce RNA-N3'PP5'A; (C) and attack of the adjacent 2'-hydroxyl on the 3'-phosphorus in the diester linkage to produce the cyclic end product. The biological role of this enzyme is unknown but it is likely to function in some aspects of cellular RNA processing. This Nitrosospira multiformis (strain ATCC 25196 / NCIMB 11849 / C 71) protein is RNA 3'-terminal phosphate cyclase.